The sequence spans 221 residues: Large ribosomal subunit protein bL25 (221 aa).

Residues 174–221 (SVVTVVPPTDEPTEEEVEAMEGEAATEEPEVVGEEKEEDSEEENKDEE) are disordered. A compositionally biased stretch (acidic residues) spans 184–221 (EPTEEEVEAMEGEAATEEPEVVGEEKEEDSEEENKDEE).

Belongs to the bacterial ribosomal protein bL25 family. CTC subfamily. As to quaternary structure, part of the 50S ribosomal subunit; part of the 5S rRNA/L5/L18/L25 subcomplex. Contacts the 5S rRNA. Binds to the 5S rRNA independently of L5 and L18.

Its function is as follows. This is one of the proteins that binds to the 5S RNA in the ribosome where it forms part of the central protuberance. This Staphylococcus haemolyticus (strain JCSC1435) protein is Large ribosomal subunit protein bL25.